A 276-amino-acid chain; its full sequence is MRESLKNSKRLVIKVGTSTLMYGNGHINLRTIEKLAMVLSDLRNEGKEVILVSSGAIGVGCHKLQLSVRPTSIPDLQAVASVGQSELMHIYSKFFGEYGQVVGQVLLTRDVTDFPISRENVMNTLDSLLSRGIIPIVNENDTVAVEELEHVTKYGDNDLLSAIVAKLVQADLLIMLSDIDGFYGSNPATDPEAVMFSEINQITPEIEALAGGRGSKFGTGGMLTKLSAASYCMDSNQKMILTNGKNPTVIFNIMQGEQIGTLFASKKEELSHDRTH.

Residue Lys14 coordinates ATP. Substrate-binding residues include Ser54, Asp141, and Asn157. ATP is bound by residues 177-178 (SD) and 219-225 (TGGMLTK).

Belongs to the glutamate 5-kinase family.

It is found in the cytoplasm. The enzyme catalyses L-glutamate + ATP = L-glutamyl 5-phosphate + ADP. Its pathway is amino-acid biosynthesis; L-proline biosynthesis; L-glutamate 5-semialdehyde from L-glutamate: step 1/2. Catalyzes the transfer of a phosphate group to glutamate to form L-glutamate 5-phosphate. The chain is Glutamate 5-kinase from Listeria monocytogenes serotype 4b (strain CLIP80459).